A 297-amino-acid chain; its full sequence is Formiminotransferase cyclodeaminase-like protein (297 aa).

Residues 2-196 (LREMLGCCKV…GVVAVGACGW (195 aa)) are formiminotransferase N-subdomain. The active-site For formimidoyltransferase activity is H89. 178-187 (GPQEVSKAKG) lines the folate pocket.

This sequence belongs to the formiminotransferase family. As to expression, expressed constitutively in roots, stems, leaves and flowers.

It is found in the golgi apparatus. Its subcellular location is the trans-Golgi network. It catalyses the reaction (6S)-5-formyl-5,6,7,8-tetrahydrofolate + L-glutamate = N-formyl-L-glutamate + (6S)-5,6,7,8-tetrahydrofolate + H(+). It carries out the reaction 5-formimidoyltetrahydrofolate + L-glutamate = N-formimidoyl-L-glutamate + (6S)-5,6,7,8-tetrahydrofolate. Its pathway is one-carbon metabolism; tetrahydrofolate interconversion. Its function is as follows. Involved in the regulation of root growth. May regulate sorting and/or transportation of trans-Golgi network (TGN) vesicles in root cap peripheral cells, thus influencing the extracellular secretion of mucilage components in the root cap. This chain is Formiminotransferase cyclodeaminase-like protein, found in Arabidopsis thaliana (Mouse-ear cress).